Here is a 209-residue protein sequence, read N- to C-terminus: Uracil phosphoribosyltransferase (209 aa).

Residues Arg-79, Arg-104, and 131–139 each bind 5-phospho-alpha-D-ribose 1-diphosphate; that span reads DPMLATGNS. Residues Ile-194 and 199-201 contribute to the uracil site; that span reads GDA. Asp-200 contributes to the 5-phospho-alpha-D-ribose 1-diphosphate binding site.

Belongs to the UPRTase family. The cofactor is Mg(2+).

The enzyme catalyses UMP + diphosphate = 5-phospho-alpha-D-ribose 1-diphosphate + uracil. Its pathway is pyrimidine metabolism; UMP biosynthesis via salvage pathway; UMP from uracil: step 1/1. Its activity is regulated as follows. Allosterically activated by GTP. Its function is as follows. Catalyzes the conversion of uracil and 5-phospho-alpha-D-ribose 1-diphosphate (PRPP) to UMP and diphosphate. This is Uracil phosphoribosyltransferase from Delftia acidovorans (strain DSM 14801 / SPH-1).